Consider the following 122-residue polypeptide: Basic phospholipase A2 homolog ecarpholin S (122 aa).

7 disulfides stabilise this stretch: Cys26–Cys115, Cys28–Cys44, Cys43–Cys95, Cys49–Cys122, Cys50–Cys88, Cys57–Cys81, and Cys75–Cys86. The tract at residues 105-117 (KKYTYYPNFWCKG) is important for membrane-damaging activities in eukaryotes and bacteria; heparin-binding.

Expressed by the venom gland.

It localises to the secreted. Suramin inhibits the myotoxic activity. Snake venom phospholipase A2 homolog that lacks enzymatic activity. Shows high myotoxin activities and displays edema-inducing activities. This Echis carinatus (Saw-scaled viper) protein is Basic phospholipase A2 homolog ecarpholin S.